Reading from the N-terminus, the 318-residue chain is Transaldolase (318 aa).

Residue lysine 132 is the Schiff-base intermediate with substrate of the active site.

The protein belongs to the transaldolase family. Type 1 subfamily. Homodimer.

The protein localises to the cytoplasm. The enzyme catalyses D-sedoheptulose 7-phosphate + D-glyceraldehyde 3-phosphate = D-erythrose 4-phosphate + beta-D-fructose 6-phosphate. It participates in carbohydrate degradation; pentose phosphate pathway; D-glyceraldehyde 3-phosphate and beta-D-fructose 6-phosphate from D-ribose 5-phosphate and D-xylulose 5-phosphate (non-oxidative stage): step 2/3. Functionally, transaldolase is important for the balance of metabolites in the pentose-phosphate pathway. This Shewanella baltica (strain OS195) protein is Transaldolase.